Consider the following 212-residue polypeptide: ER lumen protein-retaining receptor 1 (212 aa).

Residues 1-4 (MNLF) lie on the Lumenal side of the membrane. A helical membrane pass occupies residues 5 to 24 (RFLGDLSHLLAIILLLLKIW). The Cytoplasmic segment spans residues 25 to 32 (KSRSCAGI). The helical transmembrane segment at 33–52 (SGKSQVLFAVVFTARYLDLF) threads the bilayer. Residues 47-48 (RY) are interaction with the K-D-E-L motif on target proteins. Residues 53 to 58 (TNYISL) are Lumenal-facing. A helical membrane pass occupies residues 59–79 (YNTCMKVVYIACSFTTVWMIY). Over 80-92 (SKFKATYDGNHDT) the chain is Cytoplasmic. Residues 93–110 (FRVEFLVVPTAILAFLVN) form a helical membrane-spanning segment. Residues 111–116 (HDFTPL) lie on the Lumenal side of the membrane. The chain crosses the membrane as a helical span at residues 117-135 (EILWTFSIYLESVAILPQL). Residues 136–149 (FMVSKTGEAETITS) are Cytoplasmic-facing. Residues 150–168 (HYLFALGVYRTLYLFNWIW) traverse the membrane as a helical segment. Residues 159–169 (RTLYLFNWIWR) form an interaction with the K-D-E-L motif on target proteins region. Residues 169 to 178 (RYHFEGFFDL) are Lumenal-facing. Residues 179 to 199 (IAIVAGLVQTVLYCDFFYLYI) form a helical membrane-spanning segment. At 200 to 212 (TKVLKGKKLSLPA) the chain is on the cytoplasmic side. Residues 204-207 (KGKK) are important for recycling of cargo proteins with the sequence motif K-D-E-L from the Golgi to the endoplasmic reticulum. Serine 209 is modified (phosphoserine; by PKA).

This sequence belongs to the ERD2 family. Upon ligand binding the receptor oligomerizes and interacts with components of the transport machinery such as ARFGAP1 and ARF1. In terms of processing, phosphorylation by PKA at Ser-209 is required for endoplasmic reticulum retention function.

The protein resides in the golgi apparatus membrane. The protein localises to the cytoplasmic vesicle. It localises to the COPI-coated vesicle membrane. Its subcellular location is the endoplasmic reticulum membrane. It is found in the endoplasmic reticulum-Golgi intermediate compartment membrane. In terms of biological role, receptor for the C-terminal sequence motif K-D-E-L that is present on endoplasmic reticulum resident proteins and that mediates their recycling from the Golgi back to the endoplasmic reticulum. The protein is ER lumen protein-retaining receptor 1 (Kdelr1) of Mus musculus (Mouse).